We begin with the raw amino-acid sequence, 351 residues long: MIFDSLISLIPISMIMVGCCSNVISLELIMKQSQSHAILVTFFQFATVAFISFFVNIRWKQVFSIFWIPIGLRERKIPLKTYFLMVSIFFILSVLNNKALDCDIPIPFHMIFRSSSLLSTIVIGSIFYRKSYSKQQILSLIMVTLGIIFATFSSMPDSKKEISLGHEPNLLRFSIGMLMLIAAMFLSSILGLIQEHTYKLYGKDRHYETIFYSHLFSLPFFLLFKDDILHHIQLNNDSALMALPFGFGSFPTLWVYLIVNVLTQYVCIQGVFILTGKTSTLTCTLVISIRKFLSIIISVIYFNNHFTSLLFTGTILVFLGTFMYSTSGKVIEKPLPPTKQVKEIEKEKKLN.

10 helical membrane-spanning segments follow: residues 6 to 26, 37 to 57, 77 to 97, 104 to 124, 136 to 156, 173 to 193, 209 to 229, 252 to 274, 282 to 302, and 306 to 326; these read LISLIPISMIMVGCCSNVISL, AILVTFFQFATVAFISFFVNI, IPLKTYFLMVSIFFILSVLNN, IPIPFHMIFRSSSLLSTIVIG, QILSLIMVTLGIIFATFSSMP, FSIGMLMLIAAMFLSSILGLI, TIFYSHLFSLPFFLLFKDDIL, TLWVYLIVNVLTQYVCIQGVFIL, TCTLVISIRKFLSIIISVIYF, and FTSLLFTGTILVFLGTFMYST.

This sequence belongs to the nucleotide-sugar transporter family. SLC35B subfamily.

The protein localises to the golgi apparatus membrane. Its function is as follows. Sugar transporter that specifically mediates the transport of UDP-N-acetylglucosamine (UDP-GlcNAc) from cytosol into Golgi. The polypeptide is UDP-N-acetylglucosamine transporter slc35b4 (slc35b4) (Dictyostelium discoideum (Social amoeba)).